The primary structure comprises 363 residues: Copper-containing nitrite reductase (363 aa).

The first 24 residues, 1-24 (MSVFRSVLGACVLLGSCASSLALA), serve as a signal peptide directing secretion. Plastocyanin-like domains follow at residues 25–193 (GGAE…YDRV) and 194–363 (YTIG…EPKQ). Positions 113, 118, 153, 154, 163, 168, and 324 each coordinate Cu cation.

The protein belongs to the multicopper oxidase family. As to quaternary structure, homotrimer. Cu(2+) is required as a cofactor. Cu(+) serves as cofactor. It depends on FAD as a cofactor.

The protein resides in the periplasm. It carries out the reaction nitric oxide + Fe(III)-[cytochrome c] + H2O = Fe(II)-[cytochrome c] + nitrite + 2 H(+). The protein operates within nitrogen metabolism; nitrate reduction (denitrification); dinitrogen from nitrate: step 2/4. The chain is Copper-containing nitrite reductase (nirK) from Pseudomonas chlororaphis (Pseudomonas aureofaciens).